Here is a 126-residue protein sequence, read N- to C-terminus: MYPHLTSIGIEQPEAIERYSLRQEAANDILKVYFAKNKGELFAKSVKFKFPRQRKSVLVNSGSREYKEITEINRTLTHIIDELDIITKRKHTEVDIKKKILGDLRHLERVVSHKISEIEADLEKLK.

Belongs to the UPF0325 family.

The protein is UPF0325 protein PBPRA2971 of Photobacterium profundum (strain SS9).